A 460-amino-acid chain; its full sequence is C4-dicarboxylate transport protein (460 aa).

Helical transmembrane passes span 21-38 (LYFQ…IGHF), 53-75 (FIKL…GIAG), 88-110 (YALL…VVNV), 153-175 (IVGA…FGFA), 196-218 (VMFN…AMAF), 231-253 (LGQL…LGSI), 301-323 (VVGL…YLTM), and 363-385 (FIVL…ALIL). Residues 438–460 (PEDDLGVAEGPTPANAVNTTKTV) form a disordered region.

It belongs to the dicarboxylate/amino acid:cation symporter (DAACS) (TC 2.A.23) family.

The protein localises to the cell inner membrane. Responsible for the transport of dicarboxylates such as succinate, fumarate, and malate from the periplasm across the membrane. The polypeptide is C4-dicarboxylate transport protein (Pseudomonas syringae pv. tomato (strain ATCC BAA-871 / DC3000)).